Consider the following 277-residue polypeptide: Glutamate racemase (277 aa).

Substrate is bound by residues Asp25 to Ser26 and Tyr57 to Gly58. The Proton donor/acceptor role is filled by Cys89. A substrate-binding site is contributed by Asn90–Thr91. Cys204 acts as the Proton donor/acceptor in catalysis. Thr205 to His206 provides a ligand contact to substrate.

Belongs to the aspartate/glutamate racemases family.

It carries out the reaction L-glutamate = D-glutamate. The protein operates within cell wall biogenesis; peptidoglycan biosynthesis. In terms of biological role, provides the (R)-glutamate required for cell wall biosynthesis. The polypeptide is Glutamate racemase (Brucella abortus (strain 2308)).